A 328-amino-acid chain; its full sequence is Phenylalanine--tRNA ligase alpha subunit (328 aa).

Glu253 contacts Mg(2+).

This sequence belongs to the class-II aminoacyl-tRNA synthetase family. Phe-tRNA synthetase alpha subunit type 1 subfamily. Tetramer of two alpha and two beta subunits. The cofactor is Mg(2+).

The protein localises to the cytoplasm. The enzyme catalyses tRNA(Phe) + L-phenylalanine + ATP = L-phenylalanyl-tRNA(Phe) + AMP + diphosphate + H(+). This chain is Phenylalanine--tRNA ligase alpha subunit, found in Chromobacterium violaceum (strain ATCC 12472 / DSM 30191 / JCM 1249 / CCUG 213 / NBRC 12614 / NCIMB 9131 / NCTC 9757 / MK).